Consider the following 382-residue polypeptide: Kelch domain-containing protein 3 (382 aa).

Kelch repeat units lie at residues 25–77, 88–138, 139–189, 191–249, and 251–301; these read RVYS…PYMR, TVFL…VLGK, IMYI…TMLG, HMYV…GYNG, and LYIF…IVGD.

In terms of assembly, component of a CRL2(KLHDC3) complex, also named ECS(KLHDC3) complex, composed of CUL2, Elongin BC (ELOB and ELOC), RBX1 and substrate-specific adapter KLHDC3. May form oligomers as a KLHDC3-ELOB-ELOC complex; this interaction is likely autoinhibitory for the E3 ligase complex.

It localises to the cytoplasm. It functions in the pathway protein modification; protein ubiquitination. Functionally, substrate-recognition component of a Cul2-RING (CRL2) E3 ubiquitin-protein ligase complex of the DesCEND (destruction via C-end degrons) pathway, which recognizes a C-degron located at the extreme C terminus of target proteins, leading to their ubiquitination and degradation. The C-degron recognized by the DesCEND pathway is usually a motif of less than ten residues and can be present in full-length proteins, truncated proteins or proteolytically cleaved forms. The CRL2(KLHDC3) complex specifically recognizes proteins with a glycine (Gly) at the C-terminus, leading to their ubiquitination and degradation: recognizes the C-terminal -Arg-(Xaa)n-Arg-Gly, -Arg-(Xaa)n-Lys-Gly, and -Arg-(Xaa)n-Gln-Gly degrons. The CRL2(KLHDC3) complex mediates ubiquitination and degradation of truncated SELENOV and SEPHS2 selenoproteins produced by failed UGA/Sec decoding, which end with a glycine. May be involved in meiotic recombination process. The polypeptide is Kelch domain-containing protein 3 (Rattus norvegicus (Rat)).